The chain runs to 388 residues: F-box protein At4g00893 (388 aa).

The tract at residues Met1–Arg30 is disordered. Residues Asn42–His88 form the F-box domain.

This is F-box protein At4g00893 from Arabidopsis thaliana (Mouse-ear cress).